The chain runs to 379 residues: Homoserine O-succinyltransferase (379 aa).

Residues 51-360 form the AB hydrolase-1 domain; sequence NAVLICHALS…DAPQGHDAFL (310 aa). S157 acts as the Nucleophile in catalysis. R227 serves as a coordination point for substrate. Catalysis depends on residues D323 and H356. D357 is a substrate binding site.

Belongs to the AB hydrolase superfamily. MetX family. As to quaternary structure, homodimer.

It localises to the cytoplasm. It catalyses the reaction L-homoserine + succinyl-CoA = O-succinyl-L-homoserine + CoA. Its pathway is amino-acid biosynthesis; L-methionine biosynthesis via de novo pathway; O-succinyl-L-homoserine from L-homoserine: step 1/1. Transfers a succinyl group from succinyl-CoA to L-homoserine, forming succinyl-L-homoserine. The protein is Homoserine O-succinyltransferase of Pseudomonas fluorescens (strain SBW25).